Consider the following 106-residue polypeptide: Large ribosomal subunit protein uL24 (106 aa).

Belongs to the universal ribosomal protein uL24 family. Part of the 50S ribosomal subunit.

Functionally, one of two assembly initiator proteins, it binds directly to the 5'-end of the 23S rRNA, where it nucleates assembly of the 50S subunit. Its function is as follows. One of the proteins that surrounds the polypeptide exit tunnel on the outside of the subunit. This Delftia acidovorans (strain DSM 14801 / SPH-1) protein is Large ribosomal subunit protein uL24.